The primary structure comprises 504 residues: Cytochrome P450 2K1 (504 aa).

Cys-447 contributes to the heme binding site.

Belongs to the cytochrome P450 family. Heme serves as cofactor.

Its subcellular location is the endoplasmic reticulum membrane. It localises to the microsome membrane. The catalysed reaction is an organic molecule + reduced [NADPH--hemoprotein reductase] + O2 = an alcohol + oxidized [NADPH--hemoprotein reductase] + H2O + H(+). The sequence is that of Cytochrome P450 2K1 (cyp2k1) from Oncorhynchus mykiss (Rainbow trout).